Reading from the N-terminus, the 152-residue chain is Ribosome maturation factor RimP (152 aa).

It belongs to the RimP family.

Its subcellular location is the cytoplasm. Functionally, required for maturation of 30S ribosomal subunits. This Porphyromonas gingivalis (strain ATCC BAA-308 / W83) protein is Ribosome maturation factor RimP.